The primary structure comprises 67 residues: Beta-defensin 123 (67 aa).

A signal peptide spans 1 to 20; the sequence is MKLLLLTLTVLLLLSQLTPG. 3 cysteine pairs are disulfide-bonded: C25/C52, C32/C46, and C36/C53.

It belongs to the beta-defensin family. As to expression, abundant expression in the male reproductive tract only. Expressed abundantly in testis, while expression in epididymis decreased gradually from caput to cauda.

Its subcellular location is the secreted. Has antibacterial activity. This Macaca mulatta (Rhesus macaque) protein is Beta-defensin 123 (DEFB123).